The primary structure comprises 176 residues: Large ribosomal subunit protein eL20 (176 aa).

Residue Lys11 forms a Glycyl lysine isopeptide (Lys-Gly) (interchain with G-Cter in SUMO2) linkage. Phosphotyrosine is present on Tyr63. Phosphoserine is present on Ser71. Lys76 is subject to N6-succinyllysine. Phosphoserine is present on Ser123. Glycyl lysine isopeptide (Lys-Gly) (interchain with G-Cter in SUMO2) cross-links involve residues Lys128 and Lys170.

This sequence belongs to the eukaryotic ribosomal protein eL20 family. Component of the large ribosomal subunit. Binds IPO9 with high affinity.

The protein localises to the cytoplasm. In terms of biological role, component of the large ribosomal subunit. The ribosome is a large ribonucleoprotein complex responsible for the synthesis of proteins in the cell. The protein is Large ribosomal subunit protein eL20 (RPL18A) of Oryctolagus cuniculus (Rabbit).